The chain runs to 180 residues: Translation initiation factor IF-3 (180 aa).

This sequence belongs to the IF-3 family. Monomer.

Its subcellular location is the cytoplasm. IF-3 binds to the 30S ribosomal subunit and shifts the equilibrium between 70S ribosomes and their 50S and 30S subunits in favor of the free subunits, thus enhancing the availability of 30S subunits on which protein synthesis initiation begins. The sequence is that of Translation initiation factor IF-3 from Salmonella typhimurium (strain LT2 / SGSC1412 / ATCC 700720).